A 484-amino-acid chain; its full sequence is tRNA nucleotidyltransferase cca2 (484 aa).

Residues Arg122–Glu124 carry the B/A element motif. The segment at Ser125–Thr142 is flexible loop. Residues Glu234–Leu244 carry the ERhxxExxxhh motif motif.

Belongs to the tRNA nucleotidyltransferase/poly(A) polymerase family.

Its subcellular location is the cytoplasm. The enzyme catalyses a tRNA with a 3' CC end + ATP = a tRNA with a 3' CCA end + diphosphate. TRNA nucleotidyltransferase involved in the synthesis of the tRNA CCA terminus. In contrast to what is usually observed in eukaryotes for which one enzyme synthesizes the whole tRNA CCA terminus, in S.pombe, cca1 specifically adds two cytidine residues to a tRNA substrate lacking this sequence while cca2 specifically adds the terminal adenosine residue thereby completing the CCA sequence. The protein is tRNA nucleotidyltransferase cca2 of Schizosaccharomyces pombe (strain 972 / ATCC 24843) (Fission yeast).